Consider the following 888-residue polypeptide: MEPFKYICHYWGKSSKSLTKGNDIHLLIYHCLDVAAVADCWWDQSVVLQNTFCRNEMLSKQRVKAWLLFFIALHDIGKFDIRFQYKSAESWLKLNPATPSLNGPSTQMCRKFNHGAAGLYWFNQDSLSEQSLGDFFSFFDAAPHPYESWFPWVEAVTGHHGFILHSQDQDKSRWEMPASLASYAAQDKQAREEWISVLEALFLTPAGLSINDIPPDCSSLLAGFCSLADWLGSWTTTNTFLFNEDAPSDINALRTYFQDRQQDASRVLELSGLVSNKRCYEGVHALLDNGYQPRQLQVLVDALPVAPGLTVIEAPTGSGKTETALAYAWKLIDQQIADSVIFALPTQATANAMLTRMEASASHLFSSPNLILAHGNSRFNHLFQSIKSRAITEQGQEEAWVQCCQWLSQSNKKVFLGQIGVCTIDQVLISVLPVKHRFIRGLGIGRSVLIVDEVHAYDTYMNGLLEAVLKAQADVGGSVILLSATLPMKQKQKLLDTYGLHTDPVENNSAYPLINWRGVNGAQRFDLLAHPEQLPPRFSIQPEPICLADMLPDLTMLERMIAAANAGAQVCLICNLVDVAQVCYQRLKELNNTQVDIDLFHARFTLNDRREKENRVISNFGKNGKRNVGRILVATQVVEQSLDVDFDWLITQHCPADLLFQRLGRLHRHHRKYRPAGFEIPVATILLPDGEGYGRHEHIYSNVRVMWRTQQHIEELNGASLFFPDAYRQWLDSIYDDAEMDEPEWVGNGMDKFESAECEKRFKARKVLQWAEEYSLQDNDETILAVTRDGEMSLPLLPYVQTSSGKQLLDGQVYEDLSHEQQYEALALNRVNVPFTWKRSFSEVVDEDGLLWLEGKQNLDGWVWQGNSIVITYTGDEGMTRVIPANPK.

The 212-residue stretch at 20 to 231 folds into the HD Cas3-type domain; that stretch reads KGNDIHLLIY…AGFCSLADWL (212 aa). 2 residues coordinate Mg(2+): D75 and H160. In terms of domain architecture, Helicase ATP-binding spans 301–504; the sequence is DALPVAPGLT…LDTYGLHTDP (204 aa). 314–321 contacts ATP; sequence APTGSGKT. The DEAH box signature appears at 452–455; the sequence is DEVH. The 180-residue stretch at 556-735 folds into the Helicase C-terminal domain; the sequence is MLERMIAAAN…AYRQWLDSIY (180 aa).

In the N-terminal section; belongs to the CRISPR-associated nuclease Cas3-HD family. It in the central section; belongs to the CRISPR-associated helicase Cas3 family. In terms of assembly, interacts with the CasA subunit of Cascade once Cascade has recognized target DNA. Requires Mg(2+) as cofactor.

In terms of biological role, CRISPR (clustered regularly interspaced short palindromic repeat), is an adaptive immune system that provides protection against mobile genetic elements (viruses, transposable elements and conjugative plasmids). CRISPR clusters contain sequences complementary to antecedent mobile elements and target invading nucleic acids. CRISPR clusters are transcribed and processed into CRISPR RNA (crRNA). Cas3 plus Cascade participate in CRISPR interference, the third stage of CRISPR immunity. Its function is as follows. Acts as an endonuclease, a 3'-5'exonuclease, and an ATP-dependent dsDNA helicase. Anneals and unwinds R-loops (in which crRNA binds the target DNA, displacing the noncomplementary strand). Unwinding requires ATP, annealing does not. Required along with the Cascade complex for resistance to bacteriophage lambda infection as well as the ability to cure CRISPR-encoding high-copy number plasmid. A Cas3-CasA fusion protein purified with the Cascade complex nicks target plasmid in the presence but not absence of Mg(2+), and degrades plasmid fully in the presence of Mg(2+) and ATP, suggesting the helicase activity is required for complete degradation. This chain is CRISPR-associated endonuclease/helicase Cas3 (ygcB), found in Escherichia coli (strain K12).